An 88-amino-acid chain; its full sequence is Sec-independent protein translocase protein TatA (88 aa).

The helical transmembrane segment at 4-24 (LSIWHWLIVLAVVLVLFVGGG) threads the bilayer. The tract at residues 45–88 (ADDETMEGSTGSGGHIAPPGPAAGTVQRDASFSGTGRPSGSSTP) is disordered. Over residues 75-88 (SFSGTGRPSGSSTP) the composition is skewed to low complexity.

The protein belongs to the TatA/E family. As to quaternary structure, the Tat system comprises two distinct complexes: a TatABC complex, containing multiple copies of TatA, TatB and TatC subunits, and a separate TatA complex, containing only TatA subunits. Substrates initially bind to the TatABC complex, which probably triggers association of the separate TatA complex to form the active translocon.

The protein resides in the cell inner membrane. Part of the twin-arginine translocation (Tat) system that transports large folded proteins containing a characteristic twin-arginine motif in their signal peptide across membranes. TatA could form the protein-conducting channel of the Tat system. The protein is Sec-independent protein translocase protein TatA of Gluconacetobacter diazotrophicus (strain ATCC 49037 / DSM 5601 / CCUG 37298 / CIP 103539 / LMG 7603 / PAl5).